Consider the following 835-residue polypeptide: Probable RNA-directed RNA polymerase (835 aa).

This sequence belongs to the totiviridae RNA-directed RNA polymerase family.

It carries out the reaction RNA(n) + a ribonucleoside 5'-triphosphate = RNA(n+1) + diphosphate. Its function is as follows. RNA-dependent RNA polymerase which replicates the viral genome. Catalyzes the transcription of fully conservative plus-strand genomic RNAs that are extruded from the virion into the cytoplasm where they function as mRNAs for translation of viral proteins and also as substrates for encapsidation to form new virions. Once encapsidated, the positive strand is converted to dsRNA by the RNA-directed RNA polymerase. In Helminthosporium victoriae virus-190S (Hv190SV), this protein is Probable RNA-directed RNA polymerase.